The sequence spans 100 residues: MAERLTTEARKQALGGIPDWTEVSGRDAIGKTFVFKDFNEAFGFMTRAALVAEKMDHHPEWRNVYKTVEVVLSTHDAGGVTALDIELARAMNAIAKLTPG.

The protein belongs to the pterin-4-alpha-carbinolamine dehydratase family.

It carries out the reaction (4aS,6R)-4a-hydroxy-L-erythro-5,6,7,8-tetrahydrobiopterin = (6R)-L-erythro-6,7-dihydrobiopterin + H2O. In Bradyrhizobium diazoefficiens (strain JCM 10833 / BCRC 13528 / IAM 13628 / NBRC 14792 / USDA 110), this protein is Putative pterin-4-alpha-carbinolamine dehydratase.